A 1017-amino-acid chain; its full sequence is Adhesion G-protein coupled receptor G2 (1017 aa).

Positions 1-37 are cleaved as a signal peptide; sequence MVFSVRQCGHVGRTEEVLLTFKIFLVIICLHVVLVTS. Residues 38–627 lie on the Extracellular side of the membrane; that stretch reads LEEDTDNSSL…TSVLPAQMMA (590 aa). 9 N-linked (GlcNAc...) asparagine glycosylation sites follow: N44, N85, N99, N111, N117, N144, N162, N186, and N194. Residues 301 to 366 form a disordered region; sequence PLSPQPSAPI…NTTSAPPVQT (66 aa). Low complexity predominate over residues 308–320; the sequence is APIASSPAIDMPP. Composition is skewed to polar residues over residues 321-335 and 344-366; these read QSET…THVS and SFSS…PVQT. Residues N357, N370, N435, N438, N456, N461, N528, N542, N547, N551, and N597 are each glycosylated (N-linked (GlcNAc...) asparagine). The 158-residue stretch at 462 to 619 folds into the GAIN-B domain; sequence TTTFVAQDPA…GVLLDLSRTS (158 aa). Disulfide bonds link C570/C601 and C589/C603. Residues 570–619 are GPS; that stretch reads CVFWDLGRNGGRGGWSDNGCSVKDRRLNETICTCSHLTSFGVLLDLSRTS. The tract at residues 608–619 is stachel; sequence SFGVLLDLSRTS. Residues 628-648 form a helical membrane-spanning segment; sequence LTFITYIGCGLSSIFLSVTLV. Over 649–667 the chain is Cytoplasmic; it reads TYIAFEKIRRDYPSKILIQ. The chain crosses the membrane as a helical span at residues 668–688; that stretch reads LCAALLLLNLVFLLDSWIALY. Residues 689-693 are Extracellular-facing; it reads KMQGL. Residues 694 to 714 traverse the membrane as a helical segment; that stretch reads CISVAVFLHYFLLVSFTWMGL. C694 and C778 are oxidised to a cystine. The Cytoplasmic segment spans residues 715 to 737; the sequence is EAFHMYLALVKVFNTYIRKYILK. The chain crosses the membrane as a helical span at residues 738 to 758; the sequence is FCIVGWGVPAVVVTIILTISP. The Extracellular portion of the chain corresponds to 759–789; the sequence is DNYGLGSYGKFPNGSPDDFCWINNNAVFYIT. The helical transmembrane segment at 790–810 threads the bilayer; the sequence is VVGYFCVIFLLNVSMFIVVLV. At 811–834 the chain is on the cytoplasmic side; that stretch reads QLCRIKKKKQLGAQRKTSIQDLRS. A helical transmembrane segment spans residues 835-855; that stretch reads IAGLTFLLGITWGFAFFAWGP. Residues 856–857 are Extracellular-facing; the sequence is VN. N857 carries N-linked (GlcNAc...) asparagine glycosylation. The chain crosses the membrane as a helical span at residues 858-878; the sequence is VTFMYLFAIFNTLQGFFIFIF. N868 serves as a coordination point for 3beta-hydroxyandrost-5-en-17-one. Residues 879–1017 are Cytoplasmic-facing; it reads YCVAKENVRK…RGSLHFIEQM (139 aa). The tract at residues 918-939 is disordered; the sequence is QTVNQGVSSSSNSLQSSSNSTN. S1010 is modified (phosphoserine).

It belongs to the G-protein coupled receptor 2 family. Adhesion G-protein coupled receptor (ADGR) subfamily. In terms of assembly, heterodimer of 2 chains generated by proteolytic processing; the large extracellular N-terminal fragment and the membrane-bound C-terminal fragment predominantly remain associated and non-covalently linked. Interacts with CFTR. Post-translationally, proteolytically cleaved into 2 subunits, an extracellular subunit and a seven-transmembrane subunit. In terms of processing, highly glycosylated. Epididymis-specific expression (at protein level). Both subunits are associated with apical membranes of efferent ductule and proximal epididymal duct epithelia. Mainly expressed in the nonciliated principal cells of the proximal excurrent ducts. Specifically over-expressed in Ewing sarcomas but also up-regulated in a number of carcinomas derived from prostate, kidney or lung.

The protein resides in the apical cell membrane. Its activity is regulated as follows. Forms a heterodimer of 2 chains generated by proteolytic processing that remain associated through non-covalent interactions mediated by the GAIN-B domain. In the inactivated receptor, the Stachel sequence (also named stalk) is embedded in the GAIN-B domain, where it adopts a beta-strand conformation. On activation, the Stachel moves into the 7 transmembrane region and adopts a twisted hook-shaped configuration that forms contacts within the receptor, leading to coupling of a G-alpha protein, which activates signaling. The cleaved GAIN-B and N-terminal domains can then dissociate from the rest of the receptor. Deoxycorticosterone (DOC) acts as an antagonist of ADGRG2. Functionally, adhesion G-protein coupled receptor (aGPCR) for steroid hormones, such as dehydroepiandrosterone (DHEA; also named 3beta-hydroxyandrost-5-en-17-one) and androstenedione. Involved in a signal transduction pathway controlling epididymal function and male fertility. Ligand binding causes a conformation change that triggers signaling via guanine nucleotide-binding proteins (G proteins) and modulates the activity of downstream effectors, such as adenylate cyclase. ADGRG2 is coupled to G(s) G proteins and mediates activation of adenylate cyclase activity. Also able to couple with G(q) G proteins in vitro. Together with CFTR, required to promote fluid reabsorption within efferent ductule. The sequence is that of Adhesion G-protein coupled receptor G2 from Homo sapiens (Human).